The primary structure comprises 202 residues: Recombination protein RecR (202 aa).

The segment at cysteine 56–cysteine 71 adopts a C4-type zinc-finger fold. The Toprim domain maps to threonine 79–proline 179.

Belongs to the RecR family.

May play a role in DNA repair. It seems to be involved in an RecBC-independent recombinational process of DNA repair. It may act with RecF and RecO. The sequence is that of Recombination protein RecR from Nocardia farcinica (strain IFM 10152).